A 490-amino-acid polypeptide reads, in one-letter code: Betaine aldehyde dehydrogenase (490 aa).

Asp93 contacts K(+). NAD(+) is bound at residue Gly150 to Trp152. Catalysis depends on Lys162, which acts as the Charge relay system. Lys176–Glu179 is a binding site for NAD(+). Val180 lines the K(+) pocket. Gly230–Ser233 contributes to the NAD(+) binding site. Leu246 lines the K(+) pocket. Glu252 functions as the Proton acceptor in the catalytic mechanism. Residues Gly254, Cys286, and Glu387 each contribute to the NAD(+) site. The Nucleophile role is filled by Cys286. Cys286 is subject to Cysteine sulfenic acid (-SOH). The K(+) site is built by Lys457 and Gly460. Glu464 (charge relay system) is an active-site residue.

Belongs to the aldehyde dehydrogenase family. As to quaternary structure, dimer of dimers. It depends on K(+) as a cofactor.

It catalyses the reaction betaine aldehyde + NAD(+) + H2O = glycine betaine + NADH + 2 H(+). The protein operates within amine and polyamine biosynthesis; betaine biosynthesis via choline pathway; betaine from betaine aldehyde: step 1/1. In terms of biological role, involved in the biosynthesis of the osmoprotectant glycine betaine. Catalyzes the irreversible oxidation of betaine aldehyde to the corresponding acid. The protein is Betaine aldehyde dehydrogenase of Yersinia pseudotuberculosis serotype O:1b (strain IP 31758).